A 153-amino-acid polypeptide reads, in one-letter code: Interleukin-2 (153 aa).

Positions 1–20 (MYRMQLLSCIALSLALVTNS) are cleaved as a signal peptide. O-linked (GalNAc...) threonine glycosylation is present at Thr-23. Cys-78 and Cys-125 are disulfide-bonded.

This sequence belongs to the IL-2 family.

The protein localises to the secreted. Functionally, cytokine produced by activated CD4-positive helper T-cells and to a lesser extend activated CD8-positive T-cells and natural killer (NK) cells that plays pivotal roles in the immune response and tolerance. Binds to a receptor complex composed of either the high-affinity trimeric IL-2R (IL2RA/CD25, IL2RB/CD122 and IL2RG/CD132) or the low-affinity dimeric IL-2R (IL2RB and IL2RG). Interaction with the receptor leads to oligomerization and conformation changes in the IL-2R subunits resulting in downstream signaling starting with phosphorylation of JAK1 and JAK3. In turn, JAK1 and JAK3 phosphorylate the receptor to form a docking site leading to the phosphorylation of several substrates including STAT5. This process leads to activation of several pathways including STAT, phosphoinositide-3-kinase/PI3K and mitogen-activated protein kinase/MAPK pathways. Functions as a T-cell growth factor and can increase NK-cell cytolytic activity as well. Promotes strong proliferation of activated B-cells and subsequently immunoglobulin production. Plays a pivotal role in regulating the adaptive immune system by controlling the survival and proliferation of regulatory T-cells, which are required for the maintenance of immune tolerance. Moreover, participates in the differentiation and homeostasis of effector T-cell subsets, including Th1, Th2, Th17 as well as memory CD8-positive T-cells. The sequence is that of Interleukin-2 (IL2) from Homo sapiens (Human).